Here is a 339-residue protein sequence, read N- to C-terminus: Serpentine receptor class alpha-21 (339 aa).

The next 5 membrane-spanning stretches (helical) occupy residues 30–50, 150–170, 199–219, 250–270, and 282–302; these read FNFL…WLAI, FIAV…FYIA, VRTV…YLSV, ILIV…NLLL, and VLVA…PLVI.

The protein belongs to the nematode receptor-like protein sra family.

It localises to the membrane. The chain is Serpentine receptor class alpha-21 (sra-21) from Caenorhabditis elegans.